Here is a 210-residue protein sequence, read N- to C-terminus: SAP domain-containing ribonucleoprotein (210 aa).

N-acetylalanine is present on A2. In terms of domain architecture, SAP spans 8–42; that stretch reads LHKLKLAELKQECLARGLETKGIKQDLINRLQAYL. K10 bears the N6-acetyllysine mark. The segment covering 45–64 has biased composition (acidic residues); that stretch reads HAEEEANEEDVLGDETEEEE. The disordered stretch occupies residues 45-87; it reads HAEEEANEEDVLGDETEEEEPKPIELPVKEEEPPEKVVDMASE. Basic and acidic residues predominate over residues 65–87; sequence PKPIELPVKEEEPPEKVVDMASE. The residue at position 142 (K142) is an N6-acetyllysine. The tract at residues 161–210 is disordered; that stretch reads VSSISRKSEDDEKLKKRKERFGIVTSSAGTGTTEDTEAKKRKRAERFGIA. S163 is subject to Phosphoserine. The span at 184 to 193 shows a compositional bias: polar residues; it reads VTSSAGTGTT.

The protein belongs to the SAP domain-containing ribonucleoprotein family. In terms of assembly, interacts with DDX39A. Interacts with FUS. Interacts (via the C-terminal domain) with DDX39B; the interaction is direct and facilitates RNA binding of DDX39B. Component of the transcription/export (TREX) complex at least composed of ALYREF/THOC4, DDX39B, SARNP/CIP29, CHTOP and the THO subcomplex; TREX seems to have dynamic structure involving ATP-dependent remodeling; in the complex interacts directly with DDX39B in a ATP-dependent manner which bridges it to ALYREF/THOC4.

Its subcellular location is the nucleus. The protein localises to the nucleus speckle. Its function is as follows. Binds both single-stranded and double-stranded DNA with higher affinity for the single-stranded form. Specifically binds to scaffold/matrix attachment region DNA. Also binds single-stranded RNA. Enhances RNA unwinding activity of DDX39A. May participate in important transcriptional or translational control of cell growth, metabolism and carcinogenesis. Component of the TREX complex which is thought to couple mRNA transcription, processing and nuclear export, and specifically associates with spliced mRNA and not with unspliced pre-mRNA. The TREX complex is recruited to spliced mRNAs by a transcription-independent mechanism, binds to mRNA upstream of the exon-junction complex (EJC) and is recruited in a splicing- and cap-dependent manner to a region near the 5' end of the mRNA where it functions in mRNA export to the cytoplasm via the TAP/NXF1 pathway. Associates with DDX39B, which facilitates RNA binding of DDX39B and likely plays a role in mRNA export. The polypeptide is SAP domain-containing ribonucleoprotein (Sarnp) (Rattus norvegicus (Rat)).